Consider the following 155-residue polypeptide: 6,7-dimethyl-8-ribityllumazine synthase (155 aa).

5-amino-6-(D-ribitylamino)uracil contacts are provided by residues Trp-24, Ala-58 to Glu-60, and Ala-82 to Ile-84. Residue Gly-87 to Thr-88 participates in (2S)-2-hydroxy-3-oxobutyl phosphate binding. The active-site Proton donor is the His-90. Position 115 (Phe-115) interacts with 5-amino-6-(D-ribitylamino)uracil. Position 129 (Arg-129) interacts with (2S)-2-hydroxy-3-oxobutyl phosphate.

Belongs to the DMRL synthase family. In terms of assembly, forms an icosahedral capsid composed of 60 subunits, arranged as a dodecamer of pentamers.

It carries out the reaction (2S)-2-hydroxy-3-oxobutyl phosphate + 5-amino-6-(D-ribitylamino)uracil = 6,7-dimethyl-8-(1-D-ribityl)lumazine + phosphate + 2 H2O + H(+). The protein operates within cofactor biosynthesis; riboflavin biosynthesis; riboflavin from 2-hydroxy-3-oxobutyl phosphate and 5-amino-6-(D-ribitylamino)uracil: step 1/2. In terms of biological role, catalyzes the formation of 6,7-dimethyl-8-ribityllumazine by condensation of 5-amino-6-(D-ribitylamino)uracil with 3,4-dihydroxy-2-butanone 4-phosphate. This is the penultimate step in the biosynthesis of riboflavin. The polypeptide is 6,7-dimethyl-8-ribityllumazine synthase (Teredinibacter turnerae (strain ATCC 39867 / T7901)).